Reading from the N-terminus, the 777-residue chain is MNVTKDENPRSRSQDLHLFHAWMMLIMTVLFLPVTETSKQNIPRLKLTYKDLLLSNTCIPFLGSSEGLDFQTLLLDEERGILLLGAKDHVFLLSLVDLNKNFKKIYWPAAKERVELCKLAGKDANAECANFIRVLQPYNKTHVYVCGTGAFHPLCGYIDLGANKEELIFKLDTHNLESGRLKCPFDPQQPFASVMTDEHLYSGTASDFLGKDTAFTRSLGLMQDHHSIRTDISEHHWLNGAKFIGTFPIPDTYNPDDDKIYFFFRESSQEGSTSDRSILSRVGRVCKNDVGGQRSLINKWTTFLKARLICSIPGSDGADTHFDELQDIYLLPTRDERNPVVYGVFTTTSSIFKGSAVCVYSMADIRAVFNGPYAHKESADHRWVQYDGRIPYPRPGTCPSKTYDPLIKSTRDFPDDVISFIRRHPVMYKSVYPVAGAPTFKRINVDYRLTQIVVDHVVAEDGQYDVMFLGTDIGTVLKVVSISKEKWNMEEVVLEELQVFKHPTAILNMELSLKQQQLYVGSWDGLVQLSLHRCDTYGKACADCCLARDPYCAWDGNACSRYAPTSKRRARRQDVKYGDPITQCWDIEDSISHETADEKVIFGIEFNSTFLECIPKSQQASVEWYIQRSGDEHREELKPDERIIKTDYGLLIRSLQKKDSGMYYCKAQEHTFIHTIVKLTLNVIENEQMENTQRAEYQEGQVKDLLAESRLRYKDYIQILSSPNFSLDQYCEQMWYKEKRRQRNKGSPKWKHMQEMKKKRNRRHHRDLDELQRSVAT.

The N-terminal stretch at 1–37 (MNVTKDENPRSRSQDLHLFHAWMMLIMTVLFLPVTET) is a signal peptide. The Sema domain occupies 44–531 (RLKLTYKDLL…SWDGLVQLSL (488 aa)). The cysteines at positions 117 and 128 are disulfide-linked. N139 is a glycosylation site (N-linked (GlcNAc...) asparagine). Intrachain disulfides connect C146/C155, C286/C398, C310/C358, and C534/C552. Residues 533–585 (RCDTYGKACADCCLARDPYCAWDGNACSRYAPTSKRRARRQDVKYGDPITQCW) enclose the PSI domain. An Ig-like C2-type domain is found at 592–680 (SHETADEKVI…TFIHTIVKLT (89 aa)). 2 N-linked (GlcNAc...) asparagine glycosylation sites follow: N607 and N724. The cysteines at positions 665 and 731 are disulfide-linked. Residues 740 to 765 (RRQRNKGSPKWKHMQEMKKKRNRRHH) show a composition bias toward basic residues. A disordered region spans residues 740 to 777 (RRQRNKGSPKWKHMQEMKKKRNRRHHRDLDELQRSVAT). Positions 766 to 777 (RDLDELQRSVAT) are enriched in basic and acidic residues.

This sequence belongs to the semaphorin family.

The protein localises to the secreted. Induces the collapse and paralysis of neuronal growth cones. Could potentially act as repulsive cues toward specific neuronal populations. Binds to neuropilin. The polypeptide is Semaphorin-3D (Sema3d) (Mus musculus (Mouse)).